A 614-amino-acid chain; its full sequence is MSSKFDVVICGSGTAGLAAATWLAQYGVDCKILESRSGPLDVGQADGIQVRSVEIFESFGMAEELLREAYHNIEVAFWGSNPTSSGMGIVRKRSAHATTPGLSHMPRVILNQARFNEMWLEAMRRRNGQEVDYGHKVTKVTVDEEKATDPDAYPVTIVAQKDGQEQVFEAKYCLASDGAHSAVRKSLGFNMVGETSDSVWGVMDVFPRTNFPDIRKQCIIQSDAGSIITIPREGGSMVRVYVELAAGTNAKEVTLEQIQNASRQVFHPYALDVADVWWWSAYPIGQRIADHFSKANRVFLTGDACHTHSPKAGQGMNVSLQDGYNIGWKLASVLKGHAGPELLETYVLERQKVADVLINWDKVWAKQMCSIAKEDGGVVDANGKIDFSEVFVKAEAFTAGLTVTYGDSIITQAGDSNQQAATNLKVGMRLPAAQVVRFCDAKVMKTVNALPSDGRWRIMIFPGDIRQPSASTRLAQLGTYLFSNHGPIRKYLPPGADIDSLIEVIVILSGERLEIQQDQIPDAFWPTTGKYRMRDLHKIYIDDETYHNGHGHAYDFYGIDPERGAVAIVRPDQYISKVLDMKNHEGISAFFEKFLQKKGQANGSLNSHDEWTLA.

The N-terminal stretch at 1–23 is a signal peptide; the sequence is MSSKFDVVICGSGTAGLAAATWL. Residues 6–35, Q44, V137, and 239–241 each bind FAD; these read DVVI…ILES and RVY. N260 carries an N-linked (GlcNAc...) asparagine glycan. Y282 and D303 together coordinate FAD. N317 is a glycosylation site (N-linked (GlcNAc...) asparagine). Position 319 (S319) interacts with FAD. Residue N602 is glycosylated (N-linked (GlcNAc...) asparagine).

This sequence belongs to the PheA/TfdB FAD monooxygenase family. Requires FAD as cofactor.

The protein operates within secondary metabolite biosynthesis. In terms of biological role, FAD-dependent monooxygenase; part of the gene cluster that mediates the biosynthesis of terrein, a fungal metabolite with ecological, antimicrobial, antiproliferative, and antioxidative activities. The first step in the pathway is performed by the polyketide synthase terA that produces 4-hydroxy-6-methylpyranon (4-HMP), orsellinic acid (OA), and 2,3-dehydro-6-hydroxymellein (2,3-dehydro-6-HM) by condensing acetyl-CoA with two, three, or four malonyl-CoA units, respectively. 4-HMP and OA are not pathway intermediates, but are rather shunt or side products. 2,3-dehydro-6-HM is further converted to 6-hydroxymellein (6-HM) by the 6-hydroxymellein synthase terB. The monooxygenases terC and terD, the multicopper oxidase terE and the Kelch-like protein terF are then involved in the transformation of 6-HM to terrein. Even if they are co-regulated with the other terrein cluster genes, terH and terI seem to be dispensable for terrein production; whereas one or both of the 2 transporters terG and terJ are probably required for efficient secretion of metabolites. This chain is FAD-dependent monooxygenase terD, found in Aspergillus terreus (strain NIH 2624 / FGSC A1156).